Consider the following 651-residue polypeptide: Acetyl-coenzyme A synthetase (651 aa).

CoA-binding positions include 189–192, Thr311, and Asn335; that span reads RGGK. ATP-binding positions include 387 to 389, 411 to 416, Asp500, and Arg515; these read GEP and DTWWQT. Ser523 serves as a coordination point for CoA. Arg526 is a binding site for ATP. Val537, His539, and Val542 together coordinate Mg(2+). Arg584 serves as a coordination point for CoA. Lys609 is subject to N6-acetyllysine.

Belongs to the ATP-dependent AMP-binding enzyme family. Requires Mg(2+) as cofactor. In terms of processing, acetylated. Deacetylation by the SIR2-homolog deacetylase activates the enzyme.

The catalysed reaction is acetate + ATP + CoA = acetyl-CoA + AMP + diphosphate. Its function is as follows. Catalyzes the conversion of acetate into acetyl-CoA (AcCoA), an essential intermediate at the junction of anabolic and catabolic pathways. AcsA undergoes a two-step reaction. In the first half reaction, AcsA combines acetate with ATP to form acetyl-adenylate (AcAMP) intermediate. In the second half reaction, it can then transfer the acetyl group from AcAMP to the sulfhydryl group of CoA, forming the product AcCoA. This chain is Acetyl-coenzyme A synthetase, found in Rhizobium etli (strain CIAT 652).